A 54-amino-acid polypeptide reads, in one-letter code: Large ribosomal subunit protein bL33 (54 aa).

This sequence belongs to the bacterial ribosomal protein bL33 family.

The sequence is that of Large ribosomal subunit protein bL33 from Rhodopirellula baltica (strain DSM 10527 / NCIMB 13988 / SH1).